The following is a 254-amino-acid chain: Receptor expression-enhancing protein 3 (254 aa).

The next 3 helical transmembrane spans lie at 1-21 (MVSW…YPAY), 35-55 (YVRW…ETVA), and 59-79 (LAWF…LLSP). Positions 162–232 (DEPVGHRPYQ…QSMKSVKTIK (71 aa)) are disordered. The span at 198–212 (EQTDEEAEGPFSDDE) shows a compositional bias: acidic residues. Position 200 is a phosphothreonine (Thr-200). Ser-209 carries the phosphoserine modification.

It belongs to the DP1 family.

The protein resides in the endoplasmic reticulum membrane. Microtubule-binding protein required to ensure proper cell division and nuclear envelope reassembly by sequestering the endoplasmic reticulum away from chromosomes during mitosis. Probably acts by clearing the endoplasmic reticulum membrane from metaphase chromosomes. This is Receptor expression-enhancing protein 3 (Reep3) from Mus musculus (Mouse).